The primary structure comprises 157 residues: SsrA-binding protein (157 aa).

The interval 131–157 (KQLHDKRESVKQRDWQRDKARLMRDKG) is disordered. Over residues 132–157 (QLHDKRESVKQRDWQRDKARLMRDKG) the composition is skewed to basic and acidic residues.

It belongs to the SmpB family.

Its subcellular location is the cytoplasm. In terms of biological role, required for rescue of stalled ribosomes mediated by trans-translation. Binds to transfer-messenger RNA (tmRNA), required for stable association of tmRNA with ribosomes. tmRNA and SmpB together mimic tRNA shape, replacing the anticodon stem-loop with SmpB. tmRNA is encoded by the ssrA gene; the 2 termini fold to resemble tRNA(Ala) and it encodes a 'tag peptide', a short internal open reading frame. During trans-translation Ala-aminoacylated tmRNA acts like a tRNA, entering the A-site of stalled ribosomes, displacing the stalled mRNA. The ribosome then switches to translate the ORF on the tmRNA; the nascent peptide is terminated with the 'tag peptide' encoded by the tmRNA and targeted for degradation. The ribosome is freed to recommence translation, which seems to be the essential function of trans-translation. In Methylorubrum populi (strain ATCC BAA-705 / NCIMB 13946 / BJ001) (Methylobacterium populi), this protein is SsrA-binding protein.